Reading from the N-terminus, the 190-residue chain is Potassium-transporting ATPase KdpC subunit (190 aa).

The helical transmembrane segment at Pro-6 to Thr-26 threads the bilayer. Residues Gly-67–Ala-88 are disordered. Positions Pro-69–Ala-88 are enriched in polar residues.

This sequence belongs to the KdpC family. As to quaternary structure, the system is composed of three essential subunits: KdpA, KdpB and KdpC.

The protein localises to the cell inner membrane. Part of the high-affinity ATP-driven potassium transport (or Kdp) system, which catalyzes the hydrolysis of ATP coupled with the electrogenic transport of potassium into the cytoplasm. This subunit acts as a catalytic chaperone that increases the ATP-binding affinity of the ATP-hydrolyzing subunit KdpB by the formation of a transient KdpB/KdpC/ATP ternary complex. The sequence is that of Potassium-transporting ATPase KdpC subunit from Erwinia tasmaniensis (strain DSM 17950 / CFBP 7177 / CIP 109463 / NCPPB 4357 / Et1/99).